A 159-amino-acid chain; its full sequence is Ribosomal RNA large subunit methyltransferase H (159 aa).

S-adenosyl-L-methionine-binding positions include Leu76, Gly108, and 127-132 (FGKLTL).

This sequence belongs to the RNA methyltransferase RlmH family. As to quaternary structure, homodimer.

It is found in the cytoplasm. It catalyses the reaction pseudouridine(1915) in 23S rRNA + S-adenosyl-L-methionine = N(3)-methylpseudouridine(1915) in 23S rRNA + S-adenosyl-L-homocysteine + H(+). Its function is as follows. Specifically methylates the pseudouridine at position 1915 (m3Psi1915) in 23S rRNA. This Latilactobacillus sakei subsp. sakei (strain 23K) (Lactobacillus sakei subsp. sakei) protein is Ribosomal RNA large subunit methyltransferase H.